Reading from the N-terminus, the 1119-residue chain is Transient receptor potential cation channel subfamily A member 1 (1119 aa).

The Cytoplasmic portion of the chain corresponds to 1–718 (MKRSLRKMWR…MKWLAYGFRA (718 aa)). ANK repeat units follow at residues 62 to 92 (MDTF…EVLH), 97 to 126 (YGNT…NPNL), 130 to 160 (NMMA…DVNL), 164 to 193 (NGNT…KPCK), 197 to 226 (WGCF…EHGY), 238 to 267 (GKAT…QIDP), 271 to 301 (GRCT…SVDI), 308 to 337 (CHET…DINK), 341 to 370 (EGRS…QVDI), 374 to 403 (FGRN…QQIK), 412 to 441 (DGCT…SIHS), 445 to 474 (DKKS…DTRL), 481 to 510 (HGMT…LFLS), 513 to 542 (NGWT…KCTD), 547 to 576 (DGNT…DIVL), and 579 to 609 (QQAS…DECL). 5 disulfides stabilise this stretch: cysteine 192/cysteine 665, cysteine 462/cysteine 665, cysteine 608/cysteine 621, cysteine 621/cysteine 665, and cysteine 633/cysteine 856. A 4-hydroxyproline; by EGLN1; transient; in normoxia and hyperoxia modification is found at proline 394. (E)-cinnamaldehyde-binding residues include cysteine 414 and cysteine 421. Cysteine 621 contacts (E)-cinnamaldehyde. Cysteine sulfenic acid (-SOH); transient; in hyperoxia is present on cysteine 633. 3 residues coordinate (E)-cinnamaldehyde: cysteine 641, cysteine 665, and lysine 710. A helical transmembrane segment spans residues 719–739 (HMMNLGSYCLGLIPMTILVVN). At 740-767 (IKPGMAFNSTGIINETSDHSEILDTTNS) the chain is on the extracellular side. Residues asparagine 747 and asparagine 753 are each glycosylated (N-linked (GlcNAc...) asparagine). Residues 768-793 (YLIKTCMILVFLSSIFGYCKEAGQIF) traverse the membrane as a helical segment. Ca(2+) contacts are provided by glutamate 788 and glutamine 791. Topologically, residues 794–798 (QQKRN) are cytoplasmic. The chain crosses the membrane as a helical span at residues 799–823 (YFMDISNVLEWIIYTTGIIFVLPLF). Ca(2+)-binding residues include asparagine 805 and glutamate 808. Residues 824-829 (VEIPAH) are Extracellular-facing. The chain crosses the membrane as a helical span at residues 830 to 850 (LQWQCGAIAVYFYWMNFLLYL). Residues 851–862 (QRFENCGIFIVM) lie on the Cytoplasmic side of the membrane. Cysteine 856 is subject to Cysteine sulfenic acid (-SOH); transient; in hyperoxia. A helical transmembrane segment spans residues 863–892 (LEVILKTLLRSTVVFIFLLLAFGLSFYILL). At 893 to 901 (NLQDPFSSP) the chain is on the extracellular side. An intramembrane region (pore-forming) is located at residues 902 to 922 (LLSIIQTFSMMLGDINYRESF). The Extracellular segment spans residues 923-933 (LEPYLRNELAH). The helical transmembrane segment at 934–960 (PVLSFAQLVSFTIFVPIVLMNLLIGLA) threads the bilayer. Residues 961 to 1119 (VGDIAEVQKH…VKAKTHHLEP (159 aa)) lie on the Cytoplasmic side of the membrane. A coiled-coil region spans residues 1042–1071 (MEILKQKYRLKDLTFLLEKQHELIKLIIQK). 1046 to 1052 (KQKYRLK) contributes to the a 1,2-diacyl-sn-glycero-3-phospho-(1D-myo-inositol) binding site.

This sequence belongs to the transient receptor (TC 1.A.4) family. As to quaternary structure, homotetramer. Interacts with TMEM100. Interacts with EGLN1. Interacts with the scorpion wasabi receptor toxin at the same site that electrophiles but in a non-covalent manner. TRPA1 activation by electrophiles occurs though covalent modification of specific cysteine residues in the N-terminal cytoplasmic domain. In terms of processing, hydroxylation is required for TRPA1 activity inhibition in normoxia. In hypoxia, the decrease in oxygen concentration diminishes the activity of the hydroxylase EGLN1, thus relieving TRPA1 from inhibition and ultimately leading to channel activation. Post-translationally, oxidation of Cys-633 and Cys-856 in hyperoxia may override the hydroxylase EGLN1-mediated inhibition, causing TRPA1 activation.

The protein resides in the cell membrane. It catalyses the reaction Ca(2+)(in) = Ca(2+)(out). It carries out the reaction Mg(2+)(in) = Mg(2+)(out). The catalysed reaction is Na(+)(in) = Na(+)(out). The enzyme catalyses K(+)(in) = K(+)(out). It catalyses the reaction Zn(2+)(in) = Zn(2+)(out). Its activity is regulated as follows. Electrophilic ligands activate the channel by covalent modification of intracellular cysteines; Cys-621 plays a key role in covalent binding of electrophiles. Extracellular Ca(2+) both potentiates and inactivates TRPA1; a rapid potentiation follows by slow desensitization. Activated by increase in intracellular Ca(2+) concentration. Inhibited by the potent blocker of TRPV channels ruthenium red, A-967079, AP-18, HC-030031, and aryl sulfonamide derivative (S)-N-(4-chlorobenzyl)-1-((4-fluorophenyl)sulfonyl)pyrrolidine-2-carboxamide (ASD). Activated by benzyl isothiocyanate (BITC), iodoacetamide, sulfhydryl reactive agent MTSEA, N-methyl maleimide (NMM), N-ethylmaleimide (NEM), and 2-aminoethyldiphenylborinate (2-APB). Also activated by hyperoxia. Acivated by intracellular Zn(2+). TRPA1 activation may critically depend on the presence of small intracellular compounds such as polyphosphates. In terms of biological role, ligand-activated Ca(2+)-permeable, nonselective cation channel involved in pain detection and possibly also in cold perception, oxygen concentration perception, cough, itch, and inner ear function. Has a relatively high Ca(2+) selectivity, with a preference for divalent over monovalent cations (Ca(2+) &gt; Ba(2+) &gt; Mg(2+) &gt; NH4(+) &gt; Li(+) &gt; K(+)), the influx of cation into the cytoplasm leads to membrane depolarization. Has a central role in the pain response to endogenous inflammatory mediators, such as bradykinin and to a diverse array of irritants. Activated by a large variety of structurally unrelated electrophilic and non-electrophilic chemical compounds, such as allylthiocyanate (AITC) from mustard oil or wasabi, cinnamaldehyde, diallyl disulfide (DADS) from garlic, and acrolein, an environmental irritant. Electrophilic ligands activate TRPA1 by interacting with critical N-terminal Cys residues in a covalent manner. Non-electrophile agonists bind at distinct sites in the transmembrane domain to promote channel activation. Also acts as an ionotropic cannabinoid receptor by being activated by delta(9)-tetrahydrocannabinol (THC), the psychoactive component of marijuana. May be a component for the mechanosensitive transduction channel of hair cells in inner ear, thereby participating in the perception of sounds. The chain is Transient receptor potential cation channel subfamily A member 1 from Homo sapiens (Human).